The following is a 215-amino-acid chain: 3-isopropylmalate dehydratase small subunit (215 aa).

Belongs to the LeuD family. LeuD type 1 subfamily. In terms of assembly, heterodimer of LeuC and LeuD.

It catalyses the reaction (2R,3S)-3-isopropylmalate = (2S)-2-isopropylmalate. The protein operates within amino-acid biosynthesis; L-leucine biosynthesis; L-leucine from 3-methyl-2-oxobutanoate: step 2/4. Catalyzes the isomerization between 2-isopropylmalate and 3-isopropylmalate, via the formation of 2-isopropylmaleate. In Teredinibacter turnerae (strain ATCC 39867 / T7901), this protein is 3-isopropylmalate dehydratase small subunit.